Here is a 535-residue protein sequence, read N- to C-terminus: Alpha-1,3-mannosyl-glycoprotein 4-beta-N-acetylglucosaminyltransferase A (535 aa).

At 1-4 the chain is on the cytoplasmic side; sequence MRLR. A helical; Signal-anchor for type II membrane protein transmembrane segment spans residues 5-27; the sequence is NGTVATALAFITSFLTLSWYTTW. Residues 28 to 63 are a coiled coil; sequence QNGKEKLIAYQREFLALKERLRIAEHRISQRSSELN. Over 28-535 the chain is Lumenal; that stretch reads QNGKEKLIAY…NEIHIKKATN (508 aa). Residues Asn-77 and Asn-458 are each glycosylated (N-linked (GlcNAc...) asparagine). Ser-474 carries the phosphoserine modification.

This sequence belongs to the glycosyltransferase 54 family. The cofactor is a divalent metal cation. In terms of processing, N-glycosylated.

It localises to the golgi apparatus membrane. It is found in the secreted. It carries out the reaction N(4)-{beta-D-GlcNAc-(1-&gt;2)-alpha-D-Man-(1-&gt;3)-[beta-D-GlcNAc-(1-&gt;2)-alpha-D-Man-(1-&gt;6)]-beta-D-Man-(1-&gt;4)-beta-D-GlcNAc-(1-&gt;4)-beta-D-GlcNAc}-L-asparaginyl-[protein] + UDP-N-acetyl-alpha-D-glucosamine = N(4)-{beta-D-GlcNAc-(1-&gt;2)-[beta-D-GlcNAc-(1-&gt;4)]-alpha-D-Man-(1-&gt;3)-[beta-D-GlcNAc-(1-&gt;2)-alpha-D-Man-(1-&gt;6)]-beta-D-Man-(1-&gt;4)-beta-D-GlcNAc-(1-&gt;4)-beta-D-GlcNAc}-L-asparaginyl-[protein] + UDP + H(+). The enzyme catalyses an N(4)-{beta-D-GlcNAc-(1-&gt;2)-alpha-D-Man-(1-&gt;3)-[alpha-D-Man-(1-&gt;6)]-beta-D-Man-(1-&gt;4)-beta-D-GlcNAc-(1-&gt;4)-beta-D-GlcNAc}-L-asparaginyl-[protein] + UDP-N-acetyl-alpha-D-glucosamine = an N(4)-{beta-D-GlcNAc-(1-&gt;2)-[beta-D-GlcNAc-(1-&gt;4)]-alpha-D-Man-(1-&gt;3)-[alpha-D-Man-(1-&gt;6)]-beta-D-Man-(1-&gt;4)-beta-D-GlcNAc-(1-&gt;4)-beta-D-GlcNAc}-L-asparaginyl-[protein] + UDP + H(+). The catalysed reaction is an N(4)-{beta-D-GlcNAc-(1-&gt;2)-alpha-D-Man-(1-&gt;3)-[beta-D-GlcNAc-(1-&gt;2)-[beta-D-GlcNAc-(1-&gt;6)]-alpha-D-Man-(1-&gt;6)]-beta-D-Man-(1-&gt;4)-beta-D-GlcNAc-(1-&gt;4)-beta-D-GlcNAc}-L-asparaginyl-[protein] + UDP-N-acetyl-alpha-D-glucosamine = an N(4)-{beta-D-GlcNAc-(1-&gt;2)-[beta-D-GlcNAc-(1-&gt;4)]-alpha-D-Man-(1-&gt;3)-[beta-D-GlcNAc-(1-&gt;2)-[beta-D-GlcNAc-(1-&gt;6)]-alpha-D-Man-(1-&gt;6)]-beta-D-Man-(1-&gt;4)-beta-D-GlcNAc-(1-&gt;4)-beta-D-GlcNAc}-L-asparaginyl-[protein] + UDP + H(+). It catalyses the reaction an N(4)-{beta-D-GlcNAc-(1-&gt;2)-alpha-D-Man-(1-&gt;3)-[beta-D-GlcNAc-(1-&gt;2)-alpha-D-Man-(1-&gt;6)]-beta-D-Man-(1-&gt;4)-beta-D-GlcNAc-(1-&gt;4)-[alpha-L-Fuc-(1-&gt;6)]-beta-D-GlcNAc}-L-asparaginyl-[protein] + UDP-N-acetyl-alpha-D-glucosamine = N(4)-{beta-D-GlcNAc-(1-&gt;2)-[beta-D-GlcNAc-(1-&gt;4)]-alpha-D-Man-(1-&gt;3)-[beta-D-GlcNAc-(1-&gt;2)-alpha-D-Man-(1-&gt;6)]-beta-D-Man-(1-&gt;4)-beta-D-GlcNAc-(1-&gt;4)-[alpha-L-Fuc-(1-&gt;6)]-beta-D-GlcNAc}-asparaginyl-[protein] + UDP + H(+). It carries out the reaction an N(4)-{beta-D-GlcNAc-(1-&gt;2)-alpha-D-Man-(1-&gt;3)-[beta-D-Gal-(1-&gt;4)-beta-D-GlcNAc-(1-&gt;2)-alpha-D-Man-(1-&gt;6)]-beta-D-Man-(1-&gt;4)-beta-D-GlcNAc-(1-&gt;4)-beta-D-GlcNAc}-L-asparaginyl-[protein] + UDP-N-acetyl-alpha-D-glucosamine = an N(4)-{beta-D-GlcNAc-(1-&gt;2)-[beta-D-GlcNAc-(1-&gt;4)]-alpha-D-Man-(1-&gt;3)-[beta-D-Gal-(1-&gt;4)-beta-D-GlcNAc-(1-&gt;2)-alpha-D-Man-(1-&gt;6)]-beta-D-Man-(1-&gt;4)-beta-D-GlcNAc-(1-&gt;4)-beta-D-GlcNAc}-L-asparaginyl-[protein] + UDP + H(+). The enzyme catalyses N(4)-{beta-D-GlcNAc-(1-&gt;2)-alpha-D-Man-(1-&gt;3)-[alpha-D-Man-(1-&gt;3)-{alpha-D-Man-(1-&gt;6)}-alpha-D-Man-(1-&gt;6)]-beta-D-Man-(1-&gt;4)-beta-D-GlcNAc-(1-&gt;4)-beta-D-GlcNAc}-asparaginyl-[protein] + UDP-N-acetyl-alpha-D-glucosamine = N(4)-{beta-D-GlcNAc-(1-&gt;2)-[beta-D-GlcNAc-(1-&gt;4)]-alpha-D-Man-(1-&gt;3)-[alpha-D-Man-(1-&gt;3)-{alpha-D-Man-(1-&gt;6)}-alpha-D-Man-(1-&gt;6)]-beta-D-Man-(1-&gt;4)-beta-D-GlcNAc-(1-&gt;4)-beta-D-GlcNAc}-asparaginyl-[protein] + UDP + H(+). The catalysed reaction is N(4)-{beta-D-GlcNAc-(1-&gt;2)-alpha-D-Man-(1-&gt;3)-beta-D-Man-(1-&gt;4)-beta-D-GlcNAc-(1-&gt;4)-beta-D-GlcNAc}-asparaginyl-[protein] + UDP-N-acetyl-alpha-D-glucosamine = N(4)-{beta-D-GlcNAc-(1-&gt;2)-[beta-D-GlcNAc-(1-&gt;4)]-alpha-D-Man-(1-&gt;3)-beta-D-Man-(1-&gt;4)-beta-D-GlcNAc-(1-&gt;4)-beta-D-GlcNAc}-asparaginyl-[protein] + UDP + H(+). It participates in protein modification; protein glycosylation. With respect to regulation, inhibited by UDP. Glycosyltransferase that catalyze the transfer of GlcNAc from UDP-GlcNAc to the GlcNAcbeta1-2Manalpha1-3 arm of the core structure of N-linked glycans through a beta1-4 linkage and participates in the production of tri- and tetra-antennary N-linked sugar chains. Involved in glucose transport by mediating SLC2A2/GLUT2 glycosylation, thereby controlling cell-surface expression of SLC2A2 in pancreatic beta cells. The chain is Alpha-1,3-mannosyl-glycoprotein 4-beta-N-acetylglucosaminyltransferase A from Pongo abelii (Sumatran orangutan).